The primary structure comprises 1538 residues: Ferredoxin-dependent glutamate synthase (1538 aa).

The active-site For GATase activity is Cys-34. The region spanning 34 to 431 (CGVGFIADVN…PGQMISVDIF (398 aa)) is the Glutamine amidotransferase type-2 domain. 1109–1166 (LSEVHQLLAENQLRDRVTLRVDGGLRTGSDIVLAAIMGAEEFGFGTVAMIATGCIMAR) provides a ligand contact to FMN. Residues Cys-1162, Cys-1168, and Cys-1173 each coordinate [3Fe-4S] cluster.

Belongs to the glutamate synthase family. In terms of assembly, monomer. Requires [3Fe-4S] cluster as cofactor. FAD is required as a cofactor. The cofactor is FMN.

The protein resides in the plastid. It is found in the chloroplast stroma. The enzyme catalyses 2 oxidized [2Fe-2S]-[ferredoxin] + 2 L-glutamate = L-glutamine + 2 reduced [2Fe-2S]-[ferredoxin] + 2-oxoglutarate + 2 H(+). Its pathway is amino-acid biosynthesis; L-glutamate biosynthesis via GLT pathway; L-glutamate from 2-oxoglutarate and L-glutamine (ferredoxin route): step 1/1. The protein operates within energy metabolism; nitrogen metabolism. The polypeptide is Ferredoxin-dependent glutamate synthase (gltB) (Pyropia yezoensis (Susabi-nori)).